Reading from the N-terminus, the 358-residue chain is WD repeat-containing protein 53 (358 aa).

5 WD repeats span residues 8 to 47 (GHSSSILCLNANKDGLVASGGEGGDLVAWGEDGTPLGHMQ), 92 to 131 (VNEEEINCLSLNETESLLASADDSGAIKILDLEKKKVTRS), 134 to 174 (RHSN…PVWI), 195 to 234 (LNPALAHSVSVASCGNIFSCGAEDGKVRIFRVMGVKCERE), and 239 to 278 (GHTLGVSQVCFLPESSLLLTGGNDGRIRLWDVSGKMEKLQ). The tract at residues 288 to 309 (KKAKRAACPTQGGNSRAPGAED) is disordered.

It belongs to the WD repeat WDR53 family.

This chain is WD repeat-containing protein 53 (Wdr53), found in Mus musculus (Mouse).